The chain runs to 282 residues: E3 ubiquitin-protein ligase SIAH1 (282 aa).

Over residues 1-17 (MSRQTATALPTGTSKCP) the composition is skewed to polar residues. Residues 1–22 (MSRQTATALPTGTSKCPPSQRV) form a disordered region. Serine 19 bears the Phosphoserine; by ATM and ATR mark. An RING-type zinc finger spans residues 41 to 76 (CPVCFDYVLPPILQCQSGHLVCSNCRPKLTCCPTCR). Positions 90–282 (VANSVLFPCK…LGINVTISMC (193 aa)) are SBD. Residues 93–153 (SVLFPCKYAS…VMPHLMHQHK (61 aa)) form an SIAH-type zinc finger. Cysteine 98, cysteine 105, histidine 117, cysteine 121, cysteine 128, cysteine 135, histidine 147, and histidine 152 together coordinate Zn(2+).

This sequence belongs to the SINA (Seven in absentia) family. In terms of assembly, homodimer. Interacts with group 1 glutamate receptors GRM1 and GRM5. Interacts with DAB1, which may inhibit its activity. Interacts with UBE2E2. Interacts with PEG3. Interacts with GAPDH; leading to stabilize SIAH1. Component of some large E3 complex composed of UBE2D1, SIAH1, CACYBP/SIP, SKP1, APC and TBL1X. Interacts with UBE2I. Interacts with alpha-tubulin. Interacts with PEG10, which may inhibit its activity. Interacts with KHDRBS3. Interacts with SNCAIP. Interacts with HIPK2; the interaction is promoted by DAZAP2 and results in SIAH1-mediated ubiquitination and subsequent proteasomal degradation of HIPK2. Interacts with DAZAP2; the interaction is decreased following phosphorylation of DAZAP2 by HIPK2. Interacts with Bassoon/BSN and Piccolo/PLCO; these interactions negatively regulate SIAH1 E3 ligase activity. Interacts with DCC. Interacts with AXIN1; catalyzes AXIN1 ubiquitination and subsequent proteasome-mediated ubiquitin-dependent degradation. Phosphorylated on Ser-19 by ATM and ATR. This phosphorylation disrupts SIAH1 interaction with HIPK2, and subsequent proteasomal degradation of HIPK2. In terms of tissue distribution, widely expressed at a low level. Down-regulated in advanced hepatocellular carcinomas.

It is found in the cytoplasm. It localises to the nucleus. The catalysed reaction is S-ubiquitinyl-[E2 ubiquitin-conjugating enzyme]-L-cysteine + [acceptor protein]-L-lysine = [E2 ubiquitin-conjugating enzyme]-L-cysteine + N(6)-ubiquitinyl-[acceptor protein]-L-lysine.. The protein operates within protein modification; protein ubiquitination. With respect to regulation, inhibited by interaction with SNCAIP (isoform 2, but not isoform 1). May be inhibited by interaction with PEG10. Functionally, E3 ubiquitin-protein ligase that mediates ubiquitination and subsequent proteasomal degradation of target proteins. E3 ubiquitin ligases accept ubiquitin from an E2 ubiquitin-conjugating enzyme in the form of a thioester and then directly transfers the ubiquitin to targeted substrates. Mediates E3 ubiquitin ligase activity either through direct binding to substrates or by functioning as the essential RING domain subunit of larger E3 complexes. Triggers the ubiquitin-mediated degradation of many substrates, including proteins involved in transcription regulation (ELL2, MYB, POU2AF1, PML and RBBP8), a cell surface receptor (DCC), the cell-surface receptor-type tyrosine kinase FLT3, the cytoplasmic signal transduction molecules (KLF10/TIEG1 and NUMB), an antiapoptotic protein (BAG1), a microtubule motor protein (KIF22), a protein involved in synaptic vesicle function in neurons (SYP), a structural protein (CTNNB1) and SNCAIP. Confers constitutive instability to HIPK2 through proteasomal degradation. It is thereby involved in many cellular processes such as apoptosis, tumor suppression, cell cycle, axon guidance, transcription regulation, spermatogenesis and TNF-alpha signaling. Has some overlapping function with SIAH2. Induces apoptosis in cooperation with PEG3. Upon nitric oxid (NO) generation that follows apoptotic stimulation, interacts with S-nitrosylated GAPDH, mediating the translocation of GAPDH to the nucleus. GAPDH acts as a stabilizer of SIAH1, facilitating the degradation of nuclear proteins. Mediates ubiquitination and degradation of EGLN2 and EGLN3 in response to the unfolded protein response (UPR), leading to their degradation and subsequent stabilization of ATF4. Also part of the Wnt signaling pathway in which it mediates the Wnt-induced ubiquitin-mediated proteasomal degradation of AXIN1. The sequence is that of E3 ubiquitin-protein ligase SIAH1 (SIAH1) from Homo sapiens (Human).